The following is a 132-amino-acid chain: Urease subunit beta (132 aa).

Belongs to the urease beta subunit family. Heterotrimer of UreA (gamma), UreB (beta) and UreC (alpha) subunits. Three heterotrimers associate to form the active enzyme.

It is found in the cytoplasm. It carries out the reaction urea + 2 H2O + H(+) = hydrogencarbonate + 2 NH4(+). Its pathway is nitrogen metabolism; urea degradation; CO(2) and NH(3) from urea (urease route): step 1/1. This Natronomonas pharaonis (strain ATCC 35678 / DSM 2160 / CIP 103997 / JCM 8858 / NBRC 14720 / NCIMB 2260 / Gabara) (Halobacterium pharaonis) protein is Urease subunit beta.